A 276-amino-acid polypeptide reads, in one-letter code: Large ribosomal subunit protein uL2 (276 aa).

The disordered stretch occupies residues 219-276 (TVRGSAMNPNDHPHGGGEGRTSIGRPAPVTPWGKPALGYKTRDSKKASNKMIVSRRKK).

Belongs to the universal ribosomal protein uL2 family. Part of the 50S ribosomal subunit. Forms a bridge to the 30S subunit in the 70S ribosome.

One of the primary rRNA binding proteins. Required for association of the 30S and 50S subunits to form the 70S ribosome, for tRNA binding and peptide bond formation. It has been suggested to have peptidyltransferase activity; this is somewhat controversial. Makes several contacts with the 16S rRNA in the 70S ribosome. This Alkaliphilus oremlandii (strain OhILAs) (Clostridium oremlandii (strain OhILAs)) protein is Large ribosomal subunit protein uL2.